Here is a 60-residue protein sequence, read N- to C-terminus: Ras-related protein Rab-2A (60 aa).

Positions 1, 2, and 19 each coordinate GTP. Mg(2+) is bound at residue Ser1. The Effector region signature appears at 16-24 (HDLTIGVEF). A Mg(2+)-binding site is contributed by Thr19.

It belongs to the small GTPase superfamily. Rab family. In terms of assembly, interacts with PRKCI. Interacts with TRIP11. Interacts (in GTP-bound form) with GARIN1B. Interacts (GTP-bound) with HOPS complex component VPS39; interaction contributes to obtaining a functional HOPS complex that promotes autophagosome-lysosome membrane fusion driven by STX17-SNAP29-VAMP8. May interact with VPS41. It depends on Mg(2+) as a cofactor. Post-translationally, prenylated. Prenylation is required for association with cellular membranes.

It is found in the endoplasmic reticulum-Golgi intermediate compartment membrane. The protein resides in the melanosome. The protein localises to the endoplasmic reticulum membrane. It localises to the golgi apparatus membrane. Its subcellular location is the cytoplasmic vesicle. It is found in the secretory vesicle. The protein resides in the acrosome. The protein localises to the autophagosome membrane. The catalysed reaction is GTP + H2O = GDP + phosphate + H(+). With respect to regulation, regulated by guanine nucleotide exchange factors (GEFs) which promote the exchange of bound GDP for free GTP, GTPase activating proteins (GAPs) which increase the GTP hydrolysis activity, and GDP dissociation inhibitors (GDIs) which inhibit the dissociation of the nucleotide from the GTPase. Functionally, the small GTPases Rab are key regulators of intracellular membrane trafficking, from the formation of transport vesicles to their fusion with membranes. Rabs cycle between active GTP-bound and inactive GDP-bound states. In their active state, drive transport of vesicular carriers from donor organelles to acceptor organelles to regulate the membrane traffic that maintains organelle identity and morphology. RAB2A regulates autophagy by promoting autophagosome-lysosome fusion via recruitment of the HOPS endosomal tethering complex; this process involves autophagosomal RAB2A and lysosomal RAB39A recruitment of HOPS subcomplexes VPS39-VPS11 and VPS41-VPS16-VPS18-VPS33A, respectively, which assemble into a functional complex to mediate membrane tethering and SNAREs-driven membrane fusion. Required for protein transport from the endoplasmic reticulum to the Golgi complex. Regulates the compacted morphology of the Golgi. Together with RAB2B, redundantly required for efficient autophagic flux. This is Ras-related protein Rab-2A from Mesocricetus auratus (Golden hamster).